We begin with the raw amino-acid sequence, 347 residues long: Spermidine/putrescine import ATP-binding protein PotA (347 aa).

One can recognise an ABC transporter domain in the interval isoleucine 6–isoleucine 236. Residue glycine 38–threonine 45 participates in ATP binding.

The protein belongs to the ABC transporter superfamily. Spermidine/putrescine importer (TC 3.A.1.11.1) family. In terms of assembly, the complex is composed of two ATP-binding proteins (PotA), two transmembrane proteins (PotB and PotC) and a solute-binding protein (PotD).

The protein resides in the cell membrane. The enzyme catalyses ATP + H2O + polyamine-[polyamine-binding protein]Side 1 = ADP + phosphate + polyamineSide 2 + [polyamine-binding protein]Side 1.. In terms of biological role, part of the ABC transporter complex PotABCD involved in spermidine/putrescine import. Responsible for energy coupling to the transport system. This is Spermidine/putrescine import ATP-binding protein PotA from Clostridioides difficile (strain 630) (Peptoclostridium difficile).